We begin with the raw amino-acid sequence, 318 residues long: NADH-ubiquinone oxidoreductase chain 1 (318 aa).

8 consecutive transmembrane segments (helical) span residues 3-23 (LITLLSTIVPILLAVAFLTLV), 70-90 (MFIIAPILALALALTMWTPLP), 100-120 (LGILFMLAMSSLAVYAILWSG), 146-166 (LAIILLSILLMSGSYSLTTLI), 171-191 (YIWLILPSWPLTMMWFISTLA), 222-242 (LFFLAEYANIIMMNALTTILF), 254-273 (LYTTNFATKTLLLTMSFLWI), and 294-314 (LPLTLALCMWYVTMPIMLASI).

The protein belongs to the complex I subunit 1 family.

The protein localises to the mitochondrion inner membrane. The catalysed reaction is a ubiquinone + NADH + 5 H(+)(in) = a ubiquinol + NAD(+) + 4 H(+)(out). Core subunit of the mitochondrial membrane respiratory chain NADH dehydrogenase (Complex I) that is believed to belong to the minimal assembly required for catalysis. Complex I functions in the transfer of electrons from NADH to the respiratory chain. The immediate electron acceptor for the enzyme is believed to be ubiquinone. The protein is NADH-ubiquinone oxidoreductase chain 1 (MT-ND1) of Phyllostomus elongatus (Lesser spear-nosed bat).